A 223-amino-acid polypeptide reads, in one-letter code: Ribosomal RNA small subunit methyltransferase G (223 aa).

S-adenosyl-L-methionine contacts are provided by residues Gly-84, Leu-89, 135–136 (VE), and Arg-150.

This sequence belongs to the methyltransferase superfamily. RNA methyltransferase RsmG family.

The protein resides in the cytoplasm. It carries out the reaction guanosine(527) in 16S rRNA + S-adenosyl-L-methionine = N(7)-methylguanosine(527) in 16S rRNA + S-adenosyl-L-homocysteine. Its function is as follows. Specifically methylates the N7 position of guanine in position 527 of 16S rRNA. The sequence is that of Ribosomal RNA small subunit methyltransferase G from Saccharophagus degradans (strain 2-40 / ATCC 43961 / DSM 17024).